The chain runs to 357 residues: Alanine racemase (357 aa).

Lys34 functions as the Proton acceptor; specific for D-alanine in the catalytic mechanism. The residue at position 34 (Lys34) is an N6-(pyridoxal phosphate)lysine. Arg130 is a binding site for substrate. Tyr253 functions as the Proton acceptor; specific for L-alanine in the catalytic mechanism. Met301 is a substrate binding site.

Belongs to the alanine racemase family. The cofactor is pyridoxal 5'-phosphate.

It carries out the reaction L-alanine = D-alanine. It participates in amino-acid biosynthesis; D-alanine biosynthesis; D-alanine from L-alanine: step 1/1. In terms of biological role, catalyzes the interconversion of L-alanine and D-alanine. May also act on other amino acids. The sequence is that of Alanine racemase (alr) from Mannheimia succiniciproducens (strain KCTC 0769BP / MBEL55E).